Consider the following 516-residue polypeptide: MFPRLIVWLLAASAVHAVLDISNIKPKRDYENFLQKYAEYADDEVDRSVGSDITLSLKEKFVNQYLMDLKTEELKAGLKNPSQFIPSNHFFSVLDRINSSEIFKIIRRMPKGAILHAHDTALCSTDYVVSITYRDHLWQCADPKTGALQFRFSKESPKNTDTCQWTPVSEERKNQGEEQYNSKLRSQLSLYNTDPINRSRDVDSIWNDFMGLFGVNFGLLTYAPVWKDYYKQFLKEMMEDGVQYLELRGTLPPLYDLDGKIYNEEQVVEIYYNVTEEFKKENSTFIGAKFIYAPVRFVNATGIKTLTTTVKQLHERFPDFLAGFDLVGQEDKGGPLIGFSRELLELPESINFFFHSGETNWNGMTDDNLIAAVTLGTKRIGHGYALFKHPRVLKQVKKDKIAIEVCPISNQVLRLVADMRNHPGSILLANKKYPMVISSDDPSFWEATPLSHDFYMAFMGLASYHQDLRMLKQLAINSLEYSSMTLEEKTNAMKLWEAEWEKFIKELETEVFSLLE.

Residues Met1–Asp20 form the signal peptide.

This sequence belongs to the metallo-dependent hydrolases superfamily. Adenosine and AMP deaminases family. ADGF subfamily. Requires Zn(2+) as cofactor. As to expression, salivary gland (at protein level).

It is found in the secreted. It carries out the reaction adenosine + H2O + H(+) = inosine + NH4(+). Functionally, catalyzes the deamination of adenosine to inosine. This chain is Adenosine deaminase, found in Phlebotomus duboscqi (Sandfly).